Consider the following 84-residue polypeptide: Putative ribosomal RNA large subunit methyltransferase H 2 (84 aa).

S-adenosyl-L-methionine is bound by residues glycine 33 and 52–57; that span reads FSKMTF.

Belongs to the RNA methyltransferase RlmH family. As to quaternary structure, homodimer.

The protein resides in the cytoplasm. It catalyses the reaction pseudouridine(1915) in 23S rRNA + S-adenosyl-L-methionine = N(3)-methylpseudouridine(1915) in 23S rRNA + S-adenosyl-L-homocysteine + H(+). Specifically methylates the pseudouridine at position 1915 (m3Psi1915) in 23S rRNA. The protein is Putative ribosomal RNA large subunit methyltransferase H 2 (rlmH2) of Clostridium perfringens (strain SM101 / Type A).